The chain runs to 512 residues: Pantetheinase (512 aa).

Positions 1–23 (MGMSWWLACAAAFSALCVLKASS) are cleaved as a signal peptide. In terms of domain architecture, CN hydrolase spans 32 to 308 (YEHAVILPKD…GKLLFAQLKS (277 aa)). The active-site Proton acceptor is the Glu-81. Asn-132 and Asn-148 each carry an N-linked (GlcNAc...) asparagine glycan. Lys-180 serves as the catalytic Proton donor. Cys-213 acts as the Nucleophile in catalysis. N-linked (GlcNAc...) asparagine glycosylation is found at Asn-316 and Asn-354. Asn-488 carries GPI-anchor amidated asparagine lipidation. Positions 489–512 (ASSDFIAHSLIIMLIVTPIIHYLC) are cleaved as a propeptide — removed in mature form.

This sequence belongs to the carbon-nitrogen hydrolase superfamily. BTD/VNN family. Monomer. N-glycosylated. As to expression, detected in kidney (at protein level). Ubiquitous.

The protein localises to the cell membrane. It catalyses the reaction (R)-pantetheine + H2O = cysteamine + (R)-pantothenate. Amidohydrolase that hydrolyzes specifically one of the carboamide linkages in D-pantetheine thus recycling pantothenic acid (vitamin B5) and releasing cysteamine. The polypeptide is Pantetheinase (Vnn1) (Mus musculus (Mouse)).